Consider the following 186-residue polypeptide: ATP synthase subunit delta (186 aa).

Belongs to the ATPase delta chain family. In terms of assembly, F-type ATPases have 2 components, F(1) - the catalytic core - and F(0) - the membrane proton channel. F(1) has five subunits: alpha(3), beta(3), gamma(1), delta(1), epsilon(1). F(0) has three main subunits: a(1), b(2) and c(10-14). The alpha and beta chains form an alternating ring which encloses part of the gamma chain. F(1) is attached to F(0) by a central stalk formed by the gamma and epsilon chains, while a peripheral stalk is formed by the delta and b chains.

The protein resides in the cell inner membrane. In terms of biological role, f(1)F(0) ATP synthase produces ATP from ADP in the presence of a proton or sodium gradient. F-type ATPases consist of two structural domains, F(1) containing the extramembraneous catalytic core and F(0) containing the membrane proton channel, linked together by a central stalk and a peripheral stalk. During catalysis, ATP synthesis in the catalytic domain of F(1) is coupled via a rotary mechanism of the central stalk subunits to proton translocation. Functionally, this protein is part of the stalk that links CF(0) to CF(1). It either transmits conformational changes from CF(0) to CF(1) or is implicated in proton conduction. This Mesorhizobium japonicum (strain LMG 29417 / CECT 9101 / MAFF 303099) (Mesorhizobium loti (strain MAFF 303099)) protein is ATP synthase subunit delta.